The chain runs to 910 residues: Potassium/sodium hyperpolarization-activated cyclic nucleotide-gated channel 1 (910 aa).

The interval 1 to 75 (MEGGGKPNSA…PAGSFEDAEG (75 aa)) is disordered. The Cytoplasmic segment spans residues 1–131 (MEGGGKPNSA…WIIHPYSDFR (131 aa)). A helical transmembrane segment spans residues 132–153 (FYWDLIMLIMMVGNLVIIPVGI). At 154-162 (TFFTEQTTT) the chain is on the extracellular side. A helical transmembrane segment spans residues 163–183 (PWIIFNVASDTVFLLDLIMNF). Residues 184–204 (RTGTVNEDSSEIILDPKVIKM) are Cytoplasmic-facing. A helical transmembrane segment spans residues 205-225 (NYLKSWFVVDFISSIPVDYIF). Residues 226–249 (LIVEKGMDSEVYKTARALRIVRFT) lie on the Extracellular side of the membrane. Residues 250–270 (KILSLLRLLRLSRLIRYIHQW) form a helical; Voltage-sensor membrane-spanning segment. Over 271 to 284 (EEIFHMTYDLASAV) the chain is Cytoplasmic. A helical membrane pass occupies residues 285 to 307 (VRIFNLIGMMLLLCHWDGCLQFL). Residues 308–333 (VPLLQDFPPDCWVSLNEMVNDSWGKQ) are Extracellular-facing. N-linked (GlcNAc...) asparagine glycosylation occurs at N327. Residues 334 to 355 (YSYALFKAMSHMLCIGYGAQAP) constitute an intramembrane region (pore-forming). The short motif at 347–351 (CIGYG) is the Selectivity filter element. Residues 356-360 (VSMSD) lie on the Extracellular side of the membrane. Residues 361 to 381 (LWITMLSMIVGATCYAMFVGH) traverse the membrane as a helical segment. Topologically, residues 382–910 (ATALIQSLDS…AEKPRFASNL (529 aa)) are cytoplasmic. 7 residues coordinate 3',5'-cyclic AMP: G528, E529, C531, R538, T539, R579, and R582. Disordered stretches follow at residues 634–681 (TALN…QPSA), 771–791 (QQQQQPQTPGSSTPKNEVHKS), and 865–910 (QMSS…ASNL). The span at 639 to 680 (TSSTTTPTSRMRTQSPPVYTATSLSHSNLHSPSPSTQTPQPS) shows a compositional bias: low complexity. The segment covering 780 to 791 (GSSTPKNEVHKS) has biased composition (polar residues). Residues 875 to 885 (RGVPPAPPPPA) are compositionally biased toward pro residues. Residues 900-910 (DAEKPRFASNL) are compositionally biased toward basic and acidic residues.

Belongs to the potassium channel HCN family. As to quaternary structure, homotetramer. Heterotetramer with HCN2. The potassium channel is composed of a homo- or heterotetrameric complex of pore-forming subunits. Interacts with KCNE2. Interacts with the SH3 domain of CSK. In terms of processing, N-glycosylated. Predominantly expressed in brain. Highly expressed in apical dendrites of pyramidal neurons in the cortex, in the layer corresponding to the stratum lacunosum-moleculare in the hippocampus and in axons of basket cells in the cerebellum (at protein level). Expressed in a subset of elongated cells in taste buds.

It is found in the cell membrane. It catalyses the reaction Na(+)(in) = Na(+)(out). The catalysed reaction is K(+)(in) = K(+)(out). With respect to regulation, activated by cAMP. cAMP binding causes a conformation change that leads to the assembly of an active tetramer and channel opening. Compared to other family members, cAMP has less stimulatory effect on HCN1 because part of the molecules already contain bound cAMP and form homotetramers when cAMP levels are low, this inherent tetramerization in HCN1 results in a weaker response to increased cAMP. Functionally, hyperpolarization-activated ion channel that are permeable to sodium and potassium ions. Exhibits weak selectivity for potassium over sodium ions. Contributes to the native pacemaker currents in heart (If) and in neurons (Ih). Participates in cerebellar mechanisms of motor learning. May mediate responses to sour stimuli. The sequence is that of Potassium/sodium hyperpolarization-activated cyclic nucleotide-gated channel 1 (Hcn1) from Mus musculus (Mouse).